The primary structure comprises 391 residues: Formate-dependent phosphoribosylglycinamide formyltransferase (391 aa).

N(1)-(5-phospho-beta-D-ribosyl)glycinamide-binding positions include 20–21 and glutamate 80; that span reads EL. ATP-binding positions include arginine 112, lysine 153, 158–163, 193–196, and glutamate 201; these read SSGKGQ and EGFI. The 190-residue stretch at 117–306 folds into the ATP-grasp domain; sequence RLAAETLGLP…EFALHVRAIL (190 aa). Mg(2+) contacts are provided by glutamate 265 and glutamate 277. Residues aspartate 284, lysine 354, and 361–362 each bind N(1)-(5-phospho-beta-D-ribosyl)glycinamide; that span reads RR.

Belongs to the PurK/PurT family. In terms of assembly, homodimer.

It carries out the reaction N(1)-(5-phospho-beta-D-ribosyl)glycinamide + formate + ATP = N(2)-formyl-N(1)-(5-phospho-beta-D-ribosyl)glycinamide + ADP + phosphate + H(+). It participates in purine metabolism; IMP biosynthesis via de novo pathway; N(2)-formyl-N(1)-(5-phospho-D-ribosyl)glycinamide from N(1)-(5-phospho-D-ribosyl)glycinamide (formate route): step 1/1. Involved in the de novo purine biosynthesis. Catalyzes the transfer of formate to 5-phospho-ribosyl-glycinamide (GAR), producing 5-phospho-ribosyl-N-formylglycinamide (FGAR). Formate is provided by PurU via hydrolysis of 10-formyl-tetrahydrofolate. The chain is Formate-dependent phosphoribosylglycinamide formyltransferase from Shewanella sp. (strain ANA-3).